A 214-amino-acid chain; its full sequence is Adenylate kinase (214 aa).

10–15 (GAGKGT) provides a ligand contact to ATP. Positions 30–59 (STGDMLRAAVKAGTPLGVKAQEIMIQGGLV) are NMP. AMP contacts are provided by residues Thr-31, Arg-36, 57–59 (GLV), 85–88 (GFPR), and Gln-92. Positions 126-163 (GRRSCSSCGKGYHLVFDPPLRAGVCDVCGSGLVQRADD) are LID. Arg-127 lines the ATP pocket. Residues Cys-130, Cys-133, Cys-150, and Cys-153 each contribute to the Zn(2+) site. Positions 160 and 171 each coordinate AMP. Gly-199 serves as a coordination point for ATP.

The protein belongs to the adenylate kinase family. Monomer.

The protein localises to the cytoplasm. The enzyme catalyses AMP + ATP = 2 ADP. It functions in the pathway purine metabolism; AMP biosynthesis via salvage pathway; AMP from ADP: step 1/1. Functionally, catalyzes the reversible transfer of the terminal phosphate group between ATP and AMP. Plays an important role in cellular energy homeostasis and in adenine nucleotide metabolism. The polypeptide is Adenylate kinase (Trichlorobacter lovleyi (strain ATCC BAA-1151 / DSM 17278 / SZ) (Geobacter lovleyi)).